Here is a 61-residue protein sequence, read N- to C-terminus: Small ribosomal subunit protein uS14 (61 aa).

Zn(2+)-binding residues include C24, C27, C40, and C43.

Belongs to the universal ribosomal protein uS14 family. Zinc-binding uS14 subfamily. As to quaternary structure, part of the 30S ribosomal subunit. Contacts proteins S3 and S10. Zn(2+) is required as a cofactor.

Binds 16S rRNA, required for the assembly of 30S particles and may also be responsible for determining the conformation of the 16S rRNA at the A site. The polypeptide is Small ribosomal subunit protein uS14 (Thermotoga maritima (strain ATCC 43589 / DSM 3109 / JCM 10099 / NBRC 100826 / MSB8)).